Here is a 357-residue protein sequence, read N- to C-terminus: Alanine racemase (357 aa).

Lys-33 serves as the catalytic Proton acceptor; specific for D-alanine. Residue Lys-33 is modified to N6-(pyridoxal phosphate)lysine. Arg-129 is a substrate binding site. Tyr-253 serves as the catalytic Proton acceptor; specific for L-alanine. Met-301 contacts substrate.

This sequence belongs to the alanine racemase family. Pyridoxal 5'-phosphate serves as cofactor.

It catalyses the reaction L-alanine = D-alanine. The protein operates within amino-acid biosynthesis; D-alanine biosynthesis; D-alanine from L-alanine: step 1/1. Its function is as follows. Catalyzes the interconversion of L-alanine and D-alanine. May also act on other amino acids. The chain is Alanine racemase (alr) from Pseudomonas fluorescens (strain ATCC BAA-477 / NRRL B-23932 / Pf-5).